The following is a 141-amino-acid chain: Large ribosomal subunit protein uL11 (141 aa).

It belongs to the universal ribosomal protein uL11 family. Part of the ribosomal stalk of the 50S ribosomal subunit. Interacts with L10 and the large rRNA to form the base of the stalk. L10 forms an elongated spine to which L12 dimers bind in a sequential fashion forming a multimeric L10(L12)X complex. Post-translationally, one or more lysine residues are methylated.

Forms part of the ribosomal stalk which helps the ribosome interact with GTP-bound translation factors. The chain is Large ribosomal subunit protein uL11 from Dinoroseobacter shibae (strain DSM 16493 / NCIMB 14021 / DFL 12).